Consider the following 212-residue polypeptide: MSRILAVHASPRGERSQSRRLAEVFLAAYREAHPQARVARREVGRVPLPAVTEAFVAAAFHPQPEQRSLAMQADLALSDQLVGELFDSDLLVISTPMYNFSVPSGLKAWIDQIVRLGVTFDFVLDNGVAQYRPLLRGKRALIVTSRGGHGFGPGGENQAMNHADPWLRTALGFIGIDEVTVVAAEGEESGGRSFEDSCDEAEQRLLALARSA.

Residues Ser-10, 16-18 (SQS), and 97-100 (MYNF) each bind FMN. Substrate-binding residues include Asn-99 and Tyr-131. FMN contacts are provided by residues 145–148 (SRGG) and Glu-187. Substrate is bound at residue Glu-188.

The protein belongs to the azoreductase type 1 family. As to quaternary structure, homodimer. Homotetramer formed by a dimer of dimers when the ionic strength is high. The cofactor is FMN.

The catalysed reaction is 2 a quinone + NADPH + H(+) = 2 a 1,4-benzosemiquinone + NADP(+). It carries out the reaction 2 a quinone + NADH + H(+) = 2 a 1,4-benzosemiquinone + NAD(+). The enzyme catalyses N,N-dimethyl-1,4-phenylenediamine + anthranilate + 2 NAD(+) = 2-(4-dimethylaminophenyl)diazenylbenzoate + 2 NADH + 2 H(+). Its activity is regulated as follows. Azoreductase activity increases with salt strength. Quinone reductase that provides resistance to thiol-specific stress caused by electrophilic quinones. Shows a preference for benzoquinones. Functionally, also exhibits azoreductase activity. Catalyzes the reductive cleavage of the azo bond in aromatic azo compounds to the corresponding amines. NADPH is the preferred electron donor for azoreductase activity, but it can also use NADH. Can reduce different classes of azo dyes, including the common azo dyes methyl red and p-aminoazobenzene sulfonamide (PAABSA). Can activate several azo pro-drugs used in the treatment of inflammatory bowel disease (IBD), including balsalazide, sulfasalazine and olsalazine. Also acts as a nitrodeductase, and can reduce and hence activate the nitroaromatic drug nitrofurazone, a broad spectrum antibiotic. This chain is FMN-dependent NAD(P)H:quinone oxidoreductase 1, found in Pseudomonas aeruginosa (strain ATCC 15692 / DSM 22644 / CIP 104116 / JCM 14847 / LMG 12228 / 1C / PRS 101 / PAO1).